The chain runs to 561 residues: Glucose-6-phosphate isomerase (561 aa).

Catalysis depends on Glu366, which acts as the Proton donor. Residues His397 and Lys525 contribute to the active site.

The protein belongs to the GPI family.

It localises to the cytoplasm. The catalysed reaction is alpha-D-glucose 6-phosphate = beta-D-fructose 6-phosphate. Its pathway is carbohydrate degradation; glycolysis; D-glyceraldehyde 3-phosphate and glycerone phosphate from D-glucose: step 2/4. In Dictyostelium discoideum (Social amoeba), this protein is Glucose-6-phosphate isomerase (gpi).